The sequence spans 149 residues: Large ribosomal subunit protein bL9 (149 aa).

It belongs to the bacterial ribosomal protein bL9 family.

Its function is as follows. Binds to the 23S rRNA. This is Large ribosomal subunit protein bL9 from Clostridioides difficile (strain 630) (Peptoclostridium difficile).